The following is a 104-amino-acid chain: L-rhamnose mutarotase (104 aa).

Position 18 (Tyr-18) interacts with substrate. His-22 serves as the catalytic Proton donor. Residues Tyr-41 and 76-77 (WW) contribute to the substrate site.

Belongs to the rhamnose mutarotase family. As to quaternary structure, homodimer.

The protein resides in the cytoplasm. The catalysed reaction is alpha-L-rhamnose = beta-L-rhamnose. It participates in carbohydrate metabolism; L-rhamnose metabolism. In terms of biological role, involved in the anomeric conversion of L-rhamnose. The sequence is that of L-rhamnose mutarotase from Escherichia coli O7:K1 (strain IAI39 / ExPEC).